Here is a 317-residue protein sequence, read N- to C-terminus: Universal stress protein Mb2019 (317 aa).

ATP is bound by residues Gly13, 128-134 (GYRGQGA), 142-143 (SV), Gly175, Asp208, 277-283 (GSHGRGG), and 291-293 (SVS).

Belongs to the universal stress protein A family.

The polypeptide is Universal stress protein Mb2019 (Mycobacterium bovis (strain ATCC BAA-935 / AF2122/97)).